A 156-amino-acid chain; its full sequence is Transcription antitermination protein NusB (156 aa).

Belongs to the NusB family.

In terms of biological role, involved in transcription antitermination. Required for transcription of ribosomal RNA (rRNA) genes. Binds specifically to the boxA antiterminator sequence of the ribosomal RNA (rrn) operons. The protein is Transcription antitermination protein NusB of Rickettsia massiliae (strain Mtu5).